The primary structure comprises 260 residues: UPF0246 protein Veis_4789 (260 aa).

This sequence belongs to the UPF0246 family.

In Verminephrobacter eiseniae (strain EF01-2), this protein is UPF0246 protein Veis_4789.